Here is a 542-residue protein sequence, read N- to C-terminus: Glutamyl-tRNA reductase 2, chloroplastic (542 aa).

Residues 142-145 (TCNR), S202, 207-209 (EGQ), and Q213 contribute to the substrate site. Catalysis depends on C143, which acts as the Nucleophile. 284–289 (GAGKMG) is an NADP(+) binding site.

This sequence belongs to the glutamyl-tRNA reductase family. In terms of tissue distribution, found in all tissues examined.

Its subcellular location is the plastid. The protein resides in the chloroplast. The enzyme catalyses (S)-4-amino-5-oxopentanoate + tRNA(Glu) + NADP(+) = L-glutamyl-tRNA(Glu) + NADPH + H(+). It functions in the pathway porphyrin-containing compound metabolism; protoporphyrin-IX biosynthesis; 5-aminolevulinate from L-glutamyl-tRNA(Glu): step 1/2. Catalyzes the NADPH-dependent reduction of glutamyl-tRNA(Glu) to glutamate 1-semialdehyde (GSA). This chain is Glutamyl-tRNA reductase 2, chloroplastic (HEMA2), found in Cucumis sativus (Cucumber).